We begin with the raw amino-acid sequence, 394 residues long: Gastricsin (394 aa).

An N-terminal signal peptide occupies residues 1 to 16 (MKWMVVVLLCLPLLEA). Positions 17 to 65 (TQIKVPLKKIKSIREVLREKGLLGDFLKNHKPQHARKFFRNRLAKTGDF) are cleaved as a propeptide — activation peptide. Residues 79-391 (YFGQISLGTP…DLANNRVGFA (313 aa)) enclose the Peptidase A1 domain. Asp-97 is a catalytic residue. 2 disulfides stabilise this stretch: Cys-110–Cys-115 and Cys-273–Cys-277. Thr-283 is an active-site residue. The cysteines at positions 316 and 349 are disulfide-linked.

This sequence belongs to the peptidase A1 family.

The protein localises to the secreted. It carries out the reaction More restricted specificity than pepsin A, but shows preferential cleavage at Tyr-|-Xaa bonds. High activity on hemoglobin.. Hydrolyzes a variety of proteins. The polypeptide is Gastricsin (PGC) (Cavia porcellus (Guinea pig)).